Consider the following 1034-residue polypeptide: Sodium bicarbonate cotransporter 3 (1034 aa).

2 disordered regions span residues Met1–Ser31 and His53–Val99. Over Met1 to Cys476 the chain is Extracellular. 4 positions are modified to phosphoserine: Ser57, Ser60, Ser89, and Ser155. A compositionally biased stretch (basic residues) spans Ser60 to Lys77. The span at Asp78–Pro90 shows a compositional bias: basic and acidic residues. N-linked (GlcNAc...) asparagine glycosylation occurs at Asn176. A phosphoserine mark is found at Ser238, Ser250, Ser260, Met263, Ser268, and Ser271. The span at Ser250–Ser260 shows a compositional bias: polar residues. Residues Ser250–Thr276 form a disordered region. N-linked (GlcNAc...) asparagine glycosylation is present at Asn274. Phosphoserine occurs at positions 275 and 424. Residues Leu477–Leu497 form a helical membrane-spanning segment. Topologically, residues Leu498–Arg505 are cytoplasmic. A helical transmembrane segment spans residues Ile506–Ala526. Residues Gly527–Ser563 lie on the Extracellular side of the membrane. A helical transmembrane segment spans residues Ile564 to Val584. At Cys585–Glu593 the chain is on the cytoplasmic side. A helical membrane pass occupies residues Ala594 to Leu614. Over Gly615–His685 the chain is Extracellular. An intrachain disulfide couples Cys634 to Cys636. N-linked (GlcNAc...) asparagine glycans are attached at residues Asn644, Asn654, and Asn664. Residues Cys670 and Cys682 are joined by a disulfide bond. The chain crosses the membrane as a helical span at residues Gly686–Leu706. Residues Ser707–Asp729 are Cytoplasmic-facing. Residues Phe730–Ser750 form a helical membrane-spanning segment. The Extracellular segment spans residues Pro751–Asn776. The chain crosses the membrane as a helical span at residues Pro777 to Met797. Residues Asp798 to Lys812 are Cytoplasmic-facing. A helical transmembrane segment spans residues Leu813–Leu833. The segment at Phe815–Leu915 is essential for cell membrane localization and transport activity. Topologically, residues Lys834–Cys876 are extracellular. Residues Leu877–Leu897 traverse the membrane as a helical segment. Residues Ala898–Leu1034 lie on the Cytoplasmic side of the membrane. Positions Leu918 to Asp920 are CA2-binding. The interval Lys926–Gln946 is disordered. At Thr951 the chain carries Phosphothreonine. Residues Ser960 and Ser1033 each carry the phosphoserine modification. Positions Glu1031 to Leu1034 match the PDZ-binding motif.

It belongs to the anion exchanger (TC 2.A.31) family. In terms of assembly, forms a complex with ATP6V1B1 and NHERF1/EBP50. Interacts in a pH dependent-manner with CA2/carbonic anhydrase 2. Interacts with CFTR through NHERF1/EBP50. Interacts with USH1C. Expressed in the spiral ligament throughout the cochlea and in photoreceptors of the outer plexiform layer of the retina (at protein level).

The protein resides in the basolateral cell membrane. The protein localises to the apical cell membrane. It localises to the cell projection. It is found in the stereocilium. Its subcellular location is the cell membrane. It carries out the reaction hydrogencarbonate(in) + Na(+)(in) = hydrogencarbonate(out) + Na(+)(out). Activity is inhibited by 4,4'-di-isothiocyanatostilbene-2,2'-disulfonic acid (DIDS - an inhibitor of several anion channels and transporters). Functionally, electroneutral sodium- and bicarbonate-dependent cotransporter with a Na(+):HCO3(-) 1:1 stoichiometry. Mediates the sodium-dependent bicarbonate transport important for pH recovery after acid load as well as for regulation of steady-state pH in the duodenum and vascular smooth muscle cells. Plays a key role in macrophage acidification, mediating bicarbonate import into the cytoplasm which is crucial for net acid extrusion and maintenance of cytoplasmic pH during phagocytosis. Provides cellular bicarbonate for de novo purine and pyrimidine synthesis and is a key mediator of de novo nucleotide synthesis downstream of mTORC1 signaling in proliferating cells. May be involved in maintaining locomotor activity, exploratory behavior, and hearing. This is Sodium bicarbonate cotransporter 3 (Slc4a7) from Mus musculus (Mouse).